A 319-amino-acid chain; its full sequence is Ribosomal RNA large subunit methyltransferase F (319 aa).

The disordered stretch occupies residues 1 to 25; it reads MAPFFSAMTSKKQSQGLPKGPHPDN. Positions 7 to 16 are enriched in polar residues; sequence AMTSKKQSQG.

The protein belongs to the methyltransferase superfamily. METTL16/RlmF family.

It is found in the cytoplasm. It carries out the reaction adenosine(1618) in 23S rRNA + S-adenosyl-L-methionine = N(6)-methyladenosine(1618) in 23S rRNA + S-adenosyl-L-homocysteine + H(+). Functionally, specifically methylates the adenine in position 1618 of 23S rRNA. The protein is Ribosomal RNA large subunit methyltransferase F of Shewanella amazonensis (strain ATCC BAA-1098 / SB2B).